A 1093-amino-acid chain; its full sequence is Electroneutral sodium bicarbonate exchanger 1 (1093 aa).

Disordered regions lie at residues 1–25 and 55–95; these read MPAA…AVVD and PLGR…HDTP. The Extracellular segment spans residues 1–478; the sequence is MPAAGSNEPD…DYRDALSLQC (478 aa). The span at 59-77 shows a compositional bias: basic residues; that stretch reads QSHRHHRTHGQKHRRRGRG. Zn(2+)-binding residues include F167 and L169. The VTVLP; mediates dimerization motif lies at 340 to 344; the sequence is LFILL. The helical transmembrane segment at 479–499 threads the bilayer; that stretch reads LASFLFLYCACMSPVITFGGL. The Cytoplasmic portion of the chain corresponds to 500–523; that stretch reads LGEATEGRISAIESLFGASMTGIA. A helical transmembrane segment spans residues 524–544; it reads YSLFAGQALTILGSTGPVLVF. Topologically, residues 545-565 are extracellular; sequence EKILFKFCKDYALSYLSLRAC. A helical membrane pass occupies residues 566–586; sequence IGLWTAFLCIVLVATDASSLV. The Cytoplasmic portion of the chain corresponds to 587-595; that stretch reads CYITRFTEE. Residues 596–616 traverse the membrane as a helical segment; it reads AFASLICIIFIYEAIEKLIHL. Residues 617–687 are Extracellular-facing; sequence AETYPIHMHS…EFMGSACGHH (71 aa). 2 cysteine pairs are disulfide-bonded: C636-C684 and C638-C672. An N-linked (GlcNAc) asparagine glycan is attached at N646. Residues 688 to 708 traverse the membrane as a helical segment; it reads GPYTPDVLFWSCILFFTTFIL. The Cytoplasmic portion of the chain corresponds to 709-731; it reads SSTLKTFKTSRYFPTRVRSMVSD. A helical membrane pass occupies residues 732–752; that stretch reads FAVFLTIFTMVIIDFLIGVPS. Over 753–778 the chain is Extracellular; sequence PKLQVPSVFKPTRDDRGWIINPIGPN. A helical membrane pass occupies residues 779 to 799; it reads PWWTVIAAIIPALLCTILIFM. Topologically, residues 800–824 are cytoplasmic; sequence DQQITAVIINRKEHKLKKGCGYHLD. The chain crosses the membrane as a helical span at residues 825–845; it reads LLMVAIMLGVCSIMGLPWFVA. The Extracellular segment spans residues 846–881; the sequence is ATVLSITHVNSLKLESECSAPGEQPKFLGIREQRVT. A helical membrane pass occupies residues 882–902; sequence GLMIFVLMGCSVFMTAILKFI. The Cytoplasmic segment spans residues 903 to 904; it reads PM. Residues 905–925 form a helical membrane-spanning segment; it reads PVLYGVFLYMGVSSLQGIQFF. At 926 to 962 the chain is on the extracellular side; the sequence is DRLKLFGMPAKHQPDFIYLRHVPLRKVHLFTLIQLTC. Residues 963 to 983 traverse the membrane as a helical segment; it reads LVLLWVIKASPAAIVFPMMVL. Residues 984 to 1093 are Cytoplasmic-facing; that stretch reads ALVFVRKVMD…GNAKEKSLFN (110 aa). Residues 1010 to 1036 adopt a coiled-coil conformation; that stretch reads ESKKKKLDDAKKKAKEEEEAEKMLEIG.

Belongs to the anion exchanger (TC 2.A.31) family. Homodimer. Expressed in the pyramidal cells of the hippocampus (at protein level). Highly expressed in all major regions of the brain, spinal column and in testis, and moderate levels in trachea, thyroid and medulla region of kidney. Low expression levels observed in pancreas and kidney cortex. As to expression, expressed in the brain. In terms of tissue distribution, expressed in the brain, heart and kidney.

It localises to the apical cell membrane. Its subcellular location is the basolateral cell membrane. The protein localises to the cytoplasmic vesicle. The protein resides in the secretory vesicle. It is found in the synaptic vesicle membrane. It localises to the cell membrane. The catalysed reaction is 2 hydrogencarbonate(out) + chloride(in) + Na(+)(out) = 2 hydrogencarbonate(in) + chloride(out) + Na(+)(in). With respect to regulation, activity is inhibited by 4,4'-Di-isothiocyanatostilbene-2,2'-disulfonic acid (DIDS - an inhibitor of several anion channels and transporters). Activity is inhibited by 4,4'-Di-isothiocyanatostilbene-2,2'-disulfonic acid (DIDS - an inhibitor of several anion channels and transporters). Zinc-binding negatively regulates its activity. Functionally, mediates electroneutral sodium- and carbonate-dependent chloride-HCO3(-) exchange with a Na(+):HCO3(-) stoichiometry of 2:1. Plays a major role in pH regulation in neurons. Mediates sodium reabsorption in the renal cortical collecting ducts. The protein is Electroneutral sodium bicarbonate exchanger 1 of Homo sapiens (Human).